A 232-amino-acid chain; its full sequence is uncharacterized protein (232 aa).

A helical membrane pass occupies residues 10 to 32 (GLTIYLYPVIAWIILVTKIESGL).

Its subcellular location is the membrane. This is an uncharacterized protein from Archaeoglobus fulgidus (strain ATCC 49558 / DSM 4304 / JCM 9628 / NBRC 100126 / VC-16).